We begin with the raw amino-acid sequence, 334 residues long: Beta-hexosaminidase (334 aa).

Substrate is bound by residues Asp-60, Arg-68, Arg-133, and 163-164 (KH). The Proton donor/acceptor role is filled by His-176. Asp-247 acts as the Nucleophile in catalysis.

The protein belongs to the glycosyl hydrolase 3 family. NagZ subfamily.

Its subcellular location is the cytoplasm. The enzyme catalyses Hydrolysis of terminal non-reducing N-acetyl-D-hexosamine residues in N-acetyl-beta-D-hexosaminides.. Its pathway is cell wall biogenesis; peptidoglycan recycling. In terms of biological role, plays a role in peptidoglycan recycling by cleaving the terminal beta-1,4-linked N-acetylglucosamine (GlcNAc) from peptide-linked peptidoglycan fragments, giving rise to free GlcNAc, anhydro-N-acetylmuramic acid and anhydro-N-acetylmuramic acid-linked peptides. The protein is Beta-hexosaminidase of Xanthomonas axonopodis pv. citri (strain 306).